Reading from the N-terminus, the 98-residue chain is NADH-ubiquinone oxidoreductase chain 4L (98 aa).

3 helical membrane passes run 1-21 (MPPI…GLLM), 29-49 (SLLC…ILSL), and 61-81 (IILL…LVMI).

The protein belongs to the complex I subunit 4L family. As to quaternary structure, core subunit of respiratory chain NADH dehydrogenase (Complex I) which is composed of 45 different subunits.

The protein resides in the mitochondrion inner membrane. The catalysed reaction is a ubiquinone + NADH + 5 H(+)(in) = a ubiquinol + NAD(+) + 4 H(+)(out). Core subunit of the mitochondrial membrane respiratory chain NADH dehydrogenase (Complex I) which catalyzes electron transfer from NADH through the respiratory chain, using ubiquinone as an electron acceptor. Part of the enzyme membrane arm which is embedded in the lipid bilayer and involved in proton translocation. The sequence is that of NADH-ubiquinone oxidoreductase chain 4L (MT-ND4L) from Galeopterus variegatus (Malayan flying lemur).